A 217-amino-acid polypeptide reads, in one-letter code: Neurotrophic factor BDNF precursor form (217 aa).

Residues 1–108 (PMKEVSIRGQ…AANMSMRVRR (108 aa)) constitute a propeptide that is removed on maturation. An N-linked (GlcNAc...) asparagine glycan is attached at Asn101. Cystine bridges form between Cys121–Cys188 and Cys166–Cys217.

The protein belongs to the NGF-beta family.

The protein resides in the secreted. Its function is as follows. Promotes the survival of neuronal populations that are all located either in the central nervous system or directly connected to it. The polypeptide is Neurotrophic factor BDNF precursor form (BDNF) (Acrantophis dumerili (Dumeril's ground boa)).